Here is a 333-residue protein sequence, read N- to C-terminus: Holliday junction branch migration complex subunit RuvB (333 aa).

The interval 1–182 (MDERLLSQSH…FGVTLKLEYY (182 aa)) is large ATPase domain (RuvB-L). ATP contacts are provided by residues L21, R22, G63, K66, T67, T68, 129 to 131 (EDY), R172, Y182, and R219. T67 is a binding site for Mg(2+). Positions 183–253 (ETHELAAIVS…LASDALDRLH (71 aa)) are small ATPAse domain (RuvB-S). The segment at 256 to 333 (ALGLDEVDHR…SHFGYEEEEE (78 aa)) is head domain (RuvB-H). DNA contacts are provided by R311 and R316.

Belongs to the RuvB family. In terms of assembly, homohexamer. Forms an RuvA(8)-RuvB(12)-Holliday junction (HJ) complex. HJ DNA is sandwiched between 2 RuvA tetramers; dsDNA enters through RuvA and exits via RuvB. An RuvB hexamer assembles on each DNA strand where it exits the tetramer. Each RuvB hexamer is contacted by two RuvA subunits (via domain III) on 2 adjacent RuvB subunits; this complex drives branch migration. In the full resolvosome a probable DNA-RuvA(4)-RuvB(12)-RuvC(2) complex forms which resolves the HJ.

It is found in the cytoplasm. The catalysed reaction is ATP + H2O = ADP + phosphate + H(+). Functionally, the RuvA-RuvB-RuvC complex processes Holliday junction (HJ) DNA during genetic recombination and DNA repair, while the RuvA-RuvB complex plays an important role in the rescue of blocked DNA replication forks via replication fork reversal (RFR). RuvA specifically binds to HJ cruciform DNA, conferring on it an open structure. The RuvB hexamer acts as an ATP-dependent pump, pulling dsDNA into and through the RuvAB complex. RuvB forms 2 homohexamers on either side of HJ DNA bound by 1 or 2 RuvA tetramers; 4 subunits per hexamer contact DNA at a time. Coordinated motions by a converter formed by DNA-disengaged RuvB subunits stimulates ATP hydrolysis and nucleotide exchange. Immobilization of the converter enables RuvB to convert the ATP-contained energy into a lever motion, pulling 2 nucleotides of DNA out of the RuvA tetramer per ATP hydrolyzed, thus driving DNA branch migration. The RuvB motors rotate together with the DNA substrate, which together with the progressing nucleotide cycle form the mechanistic basis for DNA recombination by continuous HJ branch migration. Branch migration allows RuvC to scan DNA until it finds its consensus sequence, where it cleaves and resolves cruciform DNA. This is Holliday junction branch migration complex subunit RuvB from Exiguobacterium sp. (strain ATCC BAA-1283 / AT1b).